The primary structure comprises 652 residues: Bifunctional protein ThiO/ThiG (652 aa).

The tract at residues 1-366 (MTRDIVIIGG…HYSRSQKQAS (366 aa)) is thiO. FAD is bound by residues 5-19 (IVII…AIAV) and 44-46 (AGM). Glu52 contacts glycine. An FAD-binding site is contributed by Val173. Residues Arg301 and Arg327 each contribute to the glycine site. 325–331 (HYRNGIL) lines the FAD pocket. The segment at 393 to 652 (PLIIAGKSFH…ASSPVTGTIS (260 aa)) is thiG. Lys494 acts as the Schiff-base intermediate with DXP in catalysis. Residues Gly555, 581–582 (AG), and 603–604 (NS) each bind 1-deoxy-D-xylulose 5-phosphate.

The protein in the N-terminal section; belongs to the DAO family. ThiO subfamily. It in the C-terminal section; belongs to the ThiG family. Interacts with ThiH and ThiS. It depends on FAD as a cofactor.

It is found in the cytoplasm. The enzyme catalyses glycine + O2 + H2O = glyoxylate + H2O2 + NH4(+). It carries out the reaction [ThiS sulfur-carrier protein]-C-terminal-Gly-aminoethanethioate + 2-iminoacetate + 1-deoxy-D-xylulose 5-phosphate = [ThiS sulfur-carrier protein]-C-terminal Gly-Gly + 2-[(2R,5Z)-2-carboxy-4-methylthiazol-5(2H)-ylidene]ethyl phosphate + 2 H2O + H(+). Its pathway is cofactor biosynthesis; thiamine diphosphate biosynthesis. Functionally, catalyzes the FAD-dependent oxidative deamination of glycine. Is essential for thiamine biosynthesis since the oxidation of glycine catalyzed by ThiO generates the glycine imine intermediate (dehydroglycine) required for the biosynthesis of the thiazole ring of thiamine pyrophosphate. Catalyzes the rearrangement of 1-deoxy-D-xylulose 5-phosphate (DXP) to produce the thiazole phosphate moiety of thiamine. Sulfur is provided by the thiocarboxylate moiety of the carrier protein ThiS. In vitro, sulfur can be provided by H(2)S. The polypeptide is Bifunctional protein ThiO/ThiG (thiO/thiG) (Nostoc sp. (strain PCC 7120 / SAG 25.82 / UTEX 2576)).